The chain runs to 567 residues: Frizzled-7 (567 aa).

The signal sequence occupies residues 1–31; the sequence is MRPAAGEAGAGLRWLGLAALLAALLGTPCAA. The Extracellular portion of the chain corresponds to 32-250; the sequence is AHHEDKAISV…EAEVRFARLW (219 aa). The region spanning 42 to 161 is the FZ domain; it reads PDHGFCQPIS…HGAGEICVGQ (120 aa). 5 cysteine pairs are disulfide-bonded: Cys-47–Cys-108, Cys-55–Cys-101, Cys-92–Cys-129, Cys-118–Cys-158, and Cys-122–Cys-146. An N-linked (GlcNAc...) asparagine glycan is attached at Asn-61. Asn-162 is a glycosylation site (N-linked (GlcNAc...) asparagine). The helical transmembrane segment at 251–271 threads the bilayer; it reads VGVWSVLCCASTLFTVLTYLV. Over 272 to 282 the chain is Cytoplasmic; sequence DMRRFSYPERP. A helical transmembrane segment spans residues 283–303; sequence IIFLSGCYFMVAVAYAAGFLL. The Extracellular portion of the chain corresponds to 304–330; sequence EERVVCLERFSEDGYRTVAQGTKKEGC. A helical membrane pass occupies residues 331–351; the sequence is TILFMILYFFGMASSIWWVIL. Topologically, residues 352-373 are cytoplasmic; it reads SLTWFLAAGMKWGHEAIEANSQ. Residues 374–394 form a helical membrane-spanning segment; sequence YFHLAAWAVPAVKTITILAMG. Residues 395-417 are Extracellular-facing; sequence QVDGDVLSGVCYVGIYSVDSLRG. A helical membrane pass occupies residues 418–438; sequence FVLAPLFVYLFIGTSFLLAGF. Residues 439-464 are Cytoplasmic-facing; that stretch reads VSLFRIRTIMKHDGTKTEKLEKLMVR. The helical transmembrane segment at 465 to 485 threads the bilayer; the sequence is IGVFSVLYTVPATIVVACYFY. Over 486–521 the chain is Extracellular; sequence EQAFRSTWEKTWLLQTCKTYAVPCPSHFAPMSPDFT. A helical membrane pass occupies residues 522–542; it reads VFMIKYLMTMIVGITTGFWIW. Residues 543-567 lie on the Cytoplasmic side of the membrane; sequence SGKTLQSWRRFYHRLSTGSKGETAV. The Lys-Thr-X-X-X-Trp motif, mediates interaction with the PDZ domain of Dvl family members signature appears at 545-550; the sequence is KTLQSW. A PDZ-binding motif is present at residues 565 to 567; the sequence is TAV.

Belongs to the G-protein coupled receptor Fz/Smo family. As to expression, expressed broadly in cranial ectoderm. Also expressed in the developing somites and in other cranial placodes, including the olfactory, lens, otic placodes (lateral half of the vesicle) and epibranchial placodes. Low level of expression in all the mesoderm derivatives in the limb buds.

The protein resides in the cell membrane. The protein localises to the endosome membrane. Functionally, receptor for Wnt proteins. Most of frizzled receptors are coupled to the beta-catenin canonical signaling pathway, which leads to the activation of disheveled proteins, inhibition of GSK-3 kinase, nuclear accumulation of beta-catenin and activation of Wnt target genes. A second signaling pathway involving PKC and calcium fluxes has been seen for some family members, but it is not yet clear if it represents a distinct pathway or if it can be integrated in the canonical pathway, as PKC seems to be required for Wnt-mediated inactivation of GSK-3 kinase. Both pathways seem to involve interactions with G-proteins. May be involved in transduction and intercellular transmission of polarity information during tissue morphogenesis and/or in differentiated tissues. The polypeptide is Frizzled-7 (FZD7) (Gallus gallus (Chicken)).